Reading from the N-terminus, the 354-residue chain is Fructose-bisphosphate aldolase (354 aa).

Residue S61 participates in D-glyceraldehyde 3-phosphate binding. D104 serves as the catalytic Proton donor. Zn(2+) contacts are provided by H105, D139, E169, and H221. Dihydroxyacetone phosphate is bound at residue G222. H260 lines the Zn(2+) pocket. Residues 261–263 and 282–285 contribute to the dihydroxyacetone phosphate site; these read GGS and NIDT.

It belongs to the class II fructose-bisphosphate aldolase family. As to quaternary structure, homodimer. The cofactor is Zn(2+).

The enzyme catalyses beta-D-fructose 1,6-bisphosphate = D-glyceraldehyde 3-phosphate + dihydroxyacetone phosphate. It participates in carbohydrate degradation; glycolysis; D-glyceraldehyde 3-phosphate and glycerone phosphate from D-glucose: step 4/4. Catalyzes the aldol condensation of dihydroxyacetone phosphate (DHAP or glycerone-phosphate) with glyceraldehyde 3-phosphate (G3P) to form fructose 1,6-bisphosphate (FBP) in gluconeogenesis and the reverse reaction in glycolysis. The polypeptide is Fructose-bisphosphate aldolase (fba) (Campylobacter jejuni subsp. jejuni serotype O:2 (strain ATCC 700819 / NCTC 11168)).